We begin with the raw amino-acid sequence, 211 residues long: MAIGLVGRKCGMTHIFTDAGAAVPVTVIHVEPNRVVQVKTLESDGYRAIQVTTGSKKRSRLTKADAGHYSKAGVEAGRGLWEFRLEDSDQDYTVGTELGVGVFAEGQFVDARARSIGKGFAGVVKRHNFRTQDATHGNSLSHRAPGSIGQNQTPGRVFKGKRMAGHMGDKNITVPNLRIVGIDAERSLLLVKGAVPGTKGADVIVRPAAKK.

The disordered stretch occupies residues 134 to 155 (ATHGNSLSHRAPGSIGQNQTPG). At Gln-152 the chain carries N5-methylglutamine.

The protein belongs to the universal ribosomal protein uL3 family. As to quaternary structure, part of the 50S ribosomal subunit. Forms a cluster with proteins L14 and L19. In terms of processing, methylated by PrmB.

Functionally, one of the primary rRNA binding proteins, it binds directly near the 3'-end of the 23S rRNA, where it nucleates assembly of the 50S subunit. The sequence is that of Large ribosomal subunit protein uL3 from Methylococcus capsulatus (strain ATCC 33009 / NCIMB 11132 / Bath).